The chain runs to 192 residues: Imidazoleglycerol-phosphate dehydratase (192 aa).

Belongs to the imidazoleglycerol-phosphate dehydratase family.

Its subcellular location is the cytoplasm. It carries out the reaction D-erythro-1-(imidazol-4-yl)glycerol 3-phosphate = 3-(imidazol-4-yl)-2-oxopropyl phosphate + H2O. The protein operates within amino-acid biosynthesis; L-histidine biosynthesis; L-histidine from 5-phospho-alpha-D-ribose 1-diphosphate: step 6/9. This is Imidazoleglycerol-phosphate dehydratase from Clostridioides difficile (strain 630) (Peptoclostridium difficile).